Consider the following 153-residue polypeptide: Endoribonuclease YbeY (153 aa).

Zn(2+)-binding residues include histidine 116, histidine 120, and histidine 126.

It belongs to the endoribonuclease YbeY family. Zn(2+) serves as cofactor.

The protein resides in the cytoplasm. Its function is as follows. Single strand-specific metallo-endoribonuclease involved in late-stage 70S ribosome quality control and in maturation of the 3' terminus of the 16S rRNA. The protein is Endoribonuclease YbeY of Clavibacter michiganensis subsp. michiganensis (strain NCPPB 382).